The following is a 368-amino-acid chain: 3-dehydroquinate synthase (368 aa).

Residues 71 to 76 (DGESFK), 105 to 109 (GVIGD), 129 to 130 (TT), Lys-142, Lys-151, and 169 to 172 (TLRT) each bind NAD(+). Positions 184, 247, and 264 each coordinate Zn(2+).

Belongs to the sugar phosphate cyclases superfamily. Dehydroquinate synthase family. The cofactor is NAD(+). It depends on Co(2+) as a cofactor. Requires Zn(2+) as cofactor.

The protein localises to the cytoplasm. It carries out the reaction 7-phospho-2-dehydro-3-deoxy-D-arabino-heptonate = 3-dehydroquinate + phosphate. It participates in metabolic intermediate biosynthesis; chorismate biosynthesis; chorismate from D-erythrose 4-phosphate and phosphoenolpyruvate: step 2/7. Its function is as follows. Catalyzes the conversion of 3-deoxy-D-arabino-heptulosonate 7-phosphate (DAHP) to dehydroquinate (DHQ). This chain is 3-dehydroquinate synthase, found in Ralstonia nicotianae (strain ATCC BAA-1114 / GMI1000) (Ralstonia solanacearum).